Here is a 256-residue protein sequence, read N- to C-terminus: Hydroxyacylglutathione hydrolase (256 aa).

Residues His-57, His-59, Asp-61, His-62, His-115, Asp-134, and His-172 each coordinate Zn(2+).

Belongs to the metallo-beta-lactamase superfamily. Glyoxalase II family. In terms of assembly, monomer. The cofactor is Zn(2+).

It carries out the reaction an S-(2-hydroxyacyl)glutathione + H2O = a 2-hydroxy carboxylate + glutathione + H(+). It participates in secondary metabolite metabolism; methylglyoxal degradation; (R)-lactate from methylglyoxal: step 2/2. Thiolesterase that catalyzes the hydrolysis of S-D-lactoyl-glutathione to form glutathione and D-lactic acid. This Maricaulis maris (strain MCS10) (Caulobacter maris) protein is Hydroxyacylglutathione hydrolase.